The sequence spans 887 residues: Dystrophin-like protein 1 (887 aa).

In terms of domain architecture, PID spans 30-197 (YQHGIHFEAK…KISMQSEDEA (168 aa)). Composition is skewed to basic and acidic residues over residues 176-186 (MQEKHEDEAAK) and 205-216 (IEERGGREEDSR). 5 disordered regions span residues 176–254 (MQEK…GTAI), 506–606 (EIHH…QYER), 641–753 (QFDM…KNTA), 804–839 (IAEEPEPSEMDPNRNNLPSSTNSSMKRRGFLPPPNT), and 853–887 (NVDRSKLPETSLLTRLTRQAQGDNSLGNLPNGYPQ). Over residues 242 to 254 (KPSTTSSSGGTAI) the composition is skewed to polar residues. Residues 434–506 (QLMRSQLDQA…QMLETKITSE (73 aa)) are a coiled coil. The span at 510 to 519 (SSSQPPQHQP) shows a compositional bias: low complexity. Basic and acidic residues predominate over residues 573–588 (KESKERRKDEGTRTEP). Over residues 597–606 (DYSSSDQYER) the composition is skewed to polar residues. 2 stretches are compositionally biased toward polar residues: residues 816–827 (NRNNLPSSTNSS) and 863–887 (SLLTRLTRQAQGDNSLGNLPNGYPQ).

As to quaternary structure, component of the dystrophin glycoprotein complex (DGC). Interacts with zyx-1. In terms of tissue distribution, expressed in muscles of the head, body wall and vulva. In some animals, weaker expression is observed in the intestinal muscles (at protein level). Isoform a is expressed in lateral neurons SDQL and SDQR.

In terms of biological role, together with dys-1 and hlh-1, participates in a common muscular function. In Caenorhabditis elegans, this protein is Dystrophin-like protein 1.